Reading from the N-terminus, the 782-residue chain is E3 ubiquitin-protein ligase SopA (782 aa).

The interval 137–171 (VSVSANNRPTVSEGRTPPVSPSLSLQATSSPSSPA) is disordered. Positions 157-171 (PSLSLQATSSPSSPA) are enriched in low complexity. Cys753 acts as the Glycyl thioester intermediate in catalysis.

This sequence belongs to the SopA E3 ligase family. Post-translationally, ubiquitinated in the presence of host E1 ubiquitin-activating enzyme, E2 ubiquitin-conjugating enzyme and ubiquitin.

The protein resides in the secreted. It is found in the host cell. The catalysed reaction is S-ubiquitinyl-[E2 ubiquitin-conjugating enzyme]-L-cysteine + [acceptor protein]-L-lysine = [E2 ubiquitin-conjugating enzyme]-L-cysteine + N(6)-ubiquitinyl-[acceptor protein]-L-lysine.. In terms of biological role, effector proteins function to alter host cell physiology and promote bacterial survival in host tissues. This protein is an E3 ubiquitin ligase that interferes with host's ubiquitination pathway. In Salmonella newport (strain SL254), this protein is E3 ubiquitin-protein ligase SopA (sopA).